Reading from the N-terminus, the 1728-residue chain is Mitochondrial 3' processome subunit 1 (1728 aa).

The transit peptide at 1–117 directs the protein to the mitochondrion; sequence MRRLILSQTL…AGKMTGSSRF (117 aa). Disordered stretches follow at residues 45 to 71, 88 to 156, and 829 to 863; these read HRKR…SGDG, ESPV…IGQQ, and GCNR…PKGT.

As to quaternary structure, component of the mitochondrial 3' processome (MPsome) complex composed at least of terminal uridylyltransferase KRET1/TUT1, 3'-5' exonuclease DSS1, MPSS1, MPSS2 and MPSS3. Within the complex, interacts with KRET1.

The protein resides in the mitochondrion. Its function is as follows. As part of the mitochondrial 3' processome (MPsome), involved in the maturation of guided RNA (gRNA) precursors. The chain is Mitochondrial 3' processome subunit 1 from Trypanosoma brucei brucei.